Here is a 277-residue protein sequence, read N- to C-terminus: Ribosomal RNA small subunit methyltransferase A (277 aa).

6 residues coordinate S-adenosyl-L-methionine: Asn18, Leu20, Gly45, Glu66, Asp89, and Asn110.

The protein belongs to the class I-like SAM-binding methyltransferase superfamily. rRNA adenine N(6)-methyltransferase family. RsmA subfamily.

The protein resides in the cytoplasm. It catalyses the reaction adenosine(1518)/adenosine(1519) in 16S rRNA + 4 S-adenosyl-L-methionine = N(6)-dimethyladenosine(1518)/N(6)-dimethyladenosine(1519) in 16S rRNA + 4 S-adenosyl-L-homocysteine + 4 H(+). Specifically dimethylates two adjacent adenosines (A1518 and A1519) in the loop of a conserved hairpin near the 3'-end of 16S rRNA in the 30S particle. May play a critical role in biogenesis of 30S subunits. The polypeptide is Ribosomal RNA small subunit methyltransferase A (Cupriavidus taiwanensis (strain DSM 17343 / BCRC 17206 / CCUG 44338 / CIP 107171 / LMG 19424 / R1) (Ralstonia taiwanensis (strain LMG 19424))).